Here is a 290-residue protein sequence, read N- to C-terminus: ATP synthase gamma chain (290 aa).

This sequence belongs to the ATPase gamma chain family. In terms of assembly, F-type ATPases have 2 components, CF(1) - the catalytic core - and CF(0) - the membrane proton channel. CF(1) has five subunits: alpha(3), beta(3), gamma(1), delta(1), epsilon(1). CF(0) has three main subunits: a, b and c.

Its subcellular location is the cell membrane. Produces ATP from ADP in the presence of a proton gradient across the membrane. The gamma chain is believed to be important in regulating ATPase activity and the flow of protons through the CF(0) complex. The polypeptide is ATP synthase gamma chain (Listeria welshimeri serovar 6b (strain ATCC 35897 / DSM 20650 / CCUG 15529 / CIP 8149 / NCTC 11857 / SLCC 5334 / V8)).